A 400-amino-acid chain; its full sequence is Argininosuccinate synthase (400 aa).

Residues 10–18 (AYSGGVDTS) and Ala-38 contribute to the ATP site. Tyr-89 lines the L-citrulline pocket. ATP is bound at residue Gly-119. L-aspartate is bound by residues Thr-121, Asn-125, and Asp-126. Residue Asn-125 participates in L-citrulline binding. Positions 129, 177, 186, 262, and 274 each coordinate L-citrulline.

Belongs to the argininosuccinate synthase family. Type 1 subfamily. As to quaternary structure, homotetramer.

It localises to the cytoplasm. The enzyme catalyses L-citrulline + L-aspartate + ATP = 2-(N(omega)-L-arginino)succinate + AMP + diphosphate + H(+). The protein operates within amino-acid biosynthesis; L-arginine biosynthesis; L-arginine from L-ornithine and carbamoyl phosphate: step 2/3. This is Argininosuccinate synthase from Prochlorococcus marinus (strain NATL2A).